Reading from the N-terminus, the 980-residue chain is Valine--tRNA ligase (980 aa).

The interval 1-40 is disordered; that stretch reads MADKGCEAAQSKDSSAPGSGEPRPKTEKELERERQKAAKL. The span at 22-40 shows a compositional bias: basic and acidic residues; it reads PRPKTEKELERERQKAAKL. The 'HIGH' region motif lies at 139–149; sequence PNVTGALHIGH. Residues 652–656 carry the 'KMSKS' region motif; that stretch reads KMSKS. Residue Lys-655 coordinates ATP.

This sequence belongs to the class-I aminoacyl-tRNA synthetase family.

The protein localises to the cytoplasm. The catalysed reaction is tRNA(Val) + L-valine + ATP = L-valyl-tRNA(Val) + AMP + diphosphate. The protein is Valine--tRNA ligase (vas2) of Schizosaccharomyces pombe (strain 972 / ATCC 24843) (Fission yeast).